The primary structure comprises 253 residues: Probable transcriptional regulatory protein AM1_1847 (253 aa).

The protein belongs to the TACO1 family.

The protein localises to the cytoplasm. This is Probable transcriptional regulatory protein AM1_1847 from Acaryochloris marina (strain MBIC 11017).